Consider the following 214-residue polypeptide: MKFFLDTANVAAIKAINELGVVDGVTTNPTIISREGRDFETVIKEICDIVDGPISAEVTGLTADAMVEEARSIAKWHDNVVVKIPMTTEGLKATNILSKEGIKTNVTLIFTVSQGLMAMKAGATYISPFIGRLEDIGTDAYQLISDLREIIDLYDFQAEIIAASIRTTAHVEAVAKLGAHIATIPDPLFAKMTQHPLTTNGLKTFMEDWASFKK.

Lys-83 acts as the Schiff-base intermediate with substrate in catalysis.

It belongs to the transaldolase family. Type 3B subfamily.

It is found in the cytoplasm. The enzyme catalyses D-sedoheptulose 7-phosphate + D-glyceraldehyde 3-phosphate = D-erythrose 4-phosphate + beta-D-fructose 6-phosphate. It functions in the pathway carbohydrate degradation; pentose phosphate pathway; D-glyceraldehyde 3-phosphate and beta-D-fructose 6-phosphate from D-ribose 5-phosphate and D-xylulose 5-phosphate (non-oxidative stage): step 2/3. In terms of biological role, transaldolase is important for the balance of metabolites in the pentose-phosphate pathway. The sequence is that of Probable transaldolase (tal) from Streptococcus pyogenes serotype M1.